Here is a 76-residue protein sequence, read N- to C-terminus: Vasotab-TY3 (76 aa).

The N-terminal stretch at 1–21 (MKFALFSVLVLMLIATFVAAD) is a signal peptide. The Kazal-like domain maps to 22-76 (DCPRICTSDYTPVCGTPSGGRRSANRTFANQCGLDSHNCLNKGDTYDKLHDGECK). Intrachain disulfides connect C23–C60, C27–C53, and C35–C75.

As to expression, expressed by the salivary gland.

It localises to the secreted. In terms of biological role, vasodilator protein that inhibits vasoconstriction of isolated rat femoral artery induced by phenylephrine. Since platelet aggregation and vasoconstriction are key hemostatic responses, particularly in small wounds, this protein likely participates in the antihemostatic responses during blood feeding. Blocks L-type calcium channels (Cav1/CACNA1) in left ventricular myocytes isolated from rat hearts. The chain is Vasotab-TY3 from Tabanus yao (Horsefly).